A 98-amino-acid polypeptide reads, in one-letter code: Large ribosomal subunit protein uL23 (98 aa).

The protein belongs to the universal ribosomal protein uL23 family. As to quaternary structure, part of the 50S ribosomal subunit. Contacts protein L29, and trigger factor when it is bound to the ribosome.

One of the early assembly proteins it binds 23S rRNA. One of the proteins that surrounds the polypeptide exit tunnel on the outside of the ribosome. Forms the main docking site for trigger factor binding to the ribosome. The chain is Large ribosomal subunit protein uL23 from Cereibacter sphaeroides (strain ATCC 17025 / ATH 2.4.3) (Rhodobacter sphaeroides).